Consider the following 501-residue polypeptide: Cystine/glutamate transporter (501 aa).

Residues 1–43 (MVRKPVVSTISKGGYLQGNVNGRLPSLGNKEPPGQEKVQLKRK) are Cytoplasmic-facing. The residue at position 26 (Ser26) is a Phosphoserine. The chain crosses the membrane as a helical span at residues 44–64 (VTLLRGVSIIIGTIIGAGIFI). The Extracellular portion of the chain corresponds to 65-74 (SPKGVLQNTG). A helical transmembrane segment spans residues 75 to 95 (SVGMSLTIWTVCGVLSLFGAL). Topologically, residues 96–101 (SYAELG) are cytoplasmic. The stretch at 102–116 (TTIKKSGGHYTYILE) is an intramembrane region. Over 117 to 130 (VFGPLPAFVRVWVE) the chain is Cytoplasmic. The chain crosses the membrane as a helical span at residues 131-150 (LLIIRPAATAVISLAFGRYI). Position 135 (Arg135) interacts with L-glutamate. Topologically, residues 151 to 163 (LEPFFIQCEIPEL) are extracellular. A helical membrane pass occupies residues 164-179 (AIKLITAVGITVVMVL). At 180–193 (NSMSVSWSARIQIF) the chain is on the cytoplasmic side. Residues 194-210 (LTFCKLTAILIIIVPGV) traverse the membrane as a helical segment. Residues 211–234 (MQLIKGQTQNFKDAFSGRDSSITR) are Extracellular-facing. The helical transmembrane segment at 235-255 (LPLAFYYGMYAYAGWFYLNFV) threads the bilayer. Tyr244 is an L-glutamate binding site. Over 256–265 (TEEVENPEKT) the chain is Cytoplasmic. A helical transmembrane segment spans residues 266-286 (IPLAICISMAIVTIGYVLTNV). The Extracellular portion of the chain corresponds to 287-317 (AYFTTINAEELLLSNAVAVTFSERLLGNFSL). The N-linked (GlcNAc...) asparagine glycan is linked to Asn314. The helical transmembrane segment at 318 to 338 (AVPIFVALSCFGSMNGGVFAV) threads the bilayer. At 339-364 (SRLFYVASREGHLPEILSMIHVRKHT) the chain is on the cytoplasmic side. The helical transmembrane segment at 365-385 (PLPAVIVLHPLTMIMLFSGDL) threads the bilayer. Residues 386 to 387 (DS) lie on the Extracellular side of the membrane. A helical membrane pass occupies residues 388–408 (LLNFLSFARWLFIGLAVAGLI). Residues 409-422 (YLRYKCPDMHRPFK) are Cytoplasmic-facing. The chain crosses the membrane as a helical span at residues 423–443 (VPLFIPALFSFTCLFMVALSL). The Extracellular portion of the chain corresponds to 444-449 (YSDPFS). The helical transmembrane segment at 450–470 (TGIGFVITLTGVPAYYLFIIW) threads the bilayer. Topologically, residues 471-501 (DKKPRWFRIMSEKITRTLQIILEVVPEEDKL) are cytoplasmic.

It belongs to the amino acid-polyamine-organocation (APC) superfamily. L-type amino acid transporter (LAT) (TC 2.A.3.8) family. In terms of assembly, disulfide-linked heterodimer with the amino acid transport protein SLC3A2/4F2hc; this interaction mediates cell membrane localization. Ubiquitinated by TRIM26; leading to proteasomal degradation. In terms of tissue distribution, expressed in term placenta and primary term cytotrophoblast. Expressed mainly in the brain, but also in pancreas.

Its subcellular location is the cell membrane. It localises to the cell projection. The protein resides in the microvillus membrane. The catalysed reaction is L-cystine(out) + L-glutamate(in) = L-cystine(in) + L-glutamate(out). The enzyme catalyses an L-alpha-amino acid(in) + L-kynurenine(out) = an L-alpha-amino acid(out) + L-kynurenine(in). It carries out the reaction N-acetyl-L-cysteine(out) + L-glutamate(in) = N-acetyl-L-cysteine(in) + L-glutamate(out). Its activity is regulated as follows. Inhibited by erastin and sulfasalazine. Inhibited by (S)-lactate. Inactivated by p-chloromercuribenzoic acid and p-chloromercuribenzenesulfonic acid. Heterodimer with SLC3A2, that functions as an antiporter by mediating the exchange of extracellular anionic L-cystine and intracellular L-glutamate across the cellular plasma membrane. Provides L-cystine for the maintenance of the redox balance between extracellular L-cystine and L-cysteine and for the maintenance of the intracellular levels of glutathione that is essential for cells protection from oxidative stress. The transport is sodium-independent, electroneutral with a stoichiometry of 1:1, and is drove by the high intracellular concentration of L-glutamate and the intracellular reduction of L-cystine. In addition, mediates the import of L-kynurenine leading to anti-ferroptotic signaling propagation required to maintain L-cystine and glutathione homeostasis. Moreover, mediates N-acetyl-L-cysteine uptake into the placenta leading to subsequently down-regulation of pathways associated with oxidative stress, inflammation and apoptosis. In vitro can also transport L-aspartate. May participate in astrocyte and meningeal cell proliferation during development and can provide neuroprotection by promoting glutathione synthesis and delivery from non-neuronal cells such as astrocytes and meningeal cells to immature neurons. Controls the production of pheomelanin pigment directly. The polypeptide is Cystine/glutamate transporter (Homo sapiens (Human)).